A 142-amino-acid chain; its full sequence is Nucleoside diphosphate kinase (142 aa).

Residues Lys-11, Phe-59, Arg-87, Thr-93, Arg-104, and Asn-114 each contribute to the ATP site. The Pros-phosphohistidine intermediate role is filled by His-117.

This sequence belongs to the NDK family. Homotetramer. Requires Mg(2+) as cofactor.

The protein resides in the cytoplasm. The catalysed reaction is a 2'-deoxyribonucleoside 5'-diphosphate + ATP = a 2'-deoxyribonucleoside 5'-triphosphate + ADP. It carries out the reaction a ribonucleoside 5'-diphosphate + ATP = a ribonucleoside 5'-triphosphate + ADP. Major role in the synthesis of nucleoside triphosphates other than ATP. The ATP gamma phosphate is transferred to the NDP beta phosphate via a ping-pong mechanism, using a phosphorylated active-site intermediate. This Marinobacter nauticus (strain ATCC 700491 / DSM 11845 / VT8) (Marinobacter aquaeolei) protein is Nucleoside diphosphate kinase.